A 137-amino-acid chain; its full sequence is Large ribosomal subunit protein uL16 (137 aa).

This sequence belongs to the universal ribosomal protein uL16 family. Part of the 50S ribosomal subunit.

In terms of biological role, binds 23S rRNA and is also seen to make contacts with the A and possibly P site tRNAs. The sequence is that of Large ribosomal subunit protein uL16 from Azotobacter vinelandii (strain DJ / ATCC BAA-1303).